Here is a 434-residue protein sequence, read N- to C-terminus: Putative B3 domain-containing protein Os04g0347400 (434 aa).

DNA-binding regions (TF-B3) lie at residues 27–124, 150–246, and 326–432; these read SFHK…FDTT, KPQF…FGIN, and WIKK…DRVE.

The protein resides in the nucleus. This is Putative B3 domain-containing protein Os04g0347400 from Oryza sativa subsp. japonica (Rice).